The chain runs to 1038 residues: Subtilisin-like protease SBT6.1 (1038 aa).

A signal peptide spans 1-30 (MKVLGEASSYPYRSCIIVVFLSVSLFWLRP). Residues 31 to 181 (STYHPQQQNL…TTLNWSRHLL (151 aa)) constitute a propeptide, removed in mature form. Asn-44, Asn-52, Asn-171, and Asn-175 each carry an N-linked (GlcNAc...) asparagine glycan. The Peptidase S8 domain maps to 175–473 (NWSRHLLAQK…VDLLESYEIL (299 aa)). The Lumenal portion of the chain corresponds to 182-1000 (AQKTQVTSMF…IDMPFLVPTR (819 aa)). Asp-212 serves as the catalytic Charge relay system. Asn-230 carries an N-linked (GlcNAc...) asparagine glycan. Catalysis depends on His-243, which acts as the Charge relay system. Asn-300 carries an N-linked (GlcNAc...) asparagine glycan. The active-site Charge relay system is Ser-409. Residues Asn-513, Asn-579, Asn-902, and Asn-954 are each glycosylated (N-linked (GlcNAc...) asparagine). A helical membrane pass occupies residues 1001 to 1021 (WIVLAGVVASGVLVLLSIWRI). The Cytoplasmic segment spans residues 1022 to 1038 (RQKRGRRRRASGSNRLA).

Belongs to the peptidase S8 family. In terms of assembly, interacts with PME1 and PME5. In terms of tissue distribution, expressed in the vasculature of roots, cotyledons and leaves.

The protein localises to the golgi apparatus membrane. Its function is as follows. Serine protease that catalyzes the first step (site-1 cleavage) in the proteolytic activation of various factors, prior to site-2 cleavage. Part of a regulated intramembrane proteolysis (RIP) cascade. Cleaves BZIP17 and BZIP28 after the Arg-Arg-Ile-Leu (RRIL) motif. May cleave BZIP49 after the RRIL motif. Targets the membrane-associated BZIP17 factor, which functions as a stress sensor and transducer in a signaling pathway that resembles an ER stress response. Following salt stress, BZIP17 is cleaved by SBT6.1 (S1P) and S2P at the C-terminus and the N-terminal bZIP component is translocated to the nucleus, where it activates the expression of salt stress response genes. Cleaves the pectinesterases PME1 after the Arg-Arg-Leu-Met (RRLM) and Arg-Arg-Leu-Leu (RRLL) motifs, and PME5 after the Arg-Arg-Leu-Leu (RRLL) and Arg-Lys-Leu-Met (RKLM) motifs. This processing and C-terminus release occurs in the Golgi apparatus and is required for cell wall targeting of pectinesterases. Thus, SBT6.1 mediates the regulated release of mature pectinesterases from the Golgi. Cleaves the peptide growth factor RALF23 after the Arg-Arg-Ile-Leu (RRIL) motif. This processing is required for RALF23 function in the negative regulation of brassinolide (BL)-mediated signaling pathway (e.g. BL-induced hypocotyl elongation and branching limitation). The sequence is that of Subtilisin-like protease SBT6.1 from Arabidopsis thaliana (Mouse-ear cress).